Here is a 526-residue protein sequence, read N- to C-terminus: Bifunctional purine biosynthesis protein PurH (526 aa).

Positions 1–145 (MIRTALLSVS…KNHQDVTVLI (145 aa)) constitute an MGS-like domain.

Belongs to the PurH family.

It catalyses the reaction (6R)-10-formyltetrahydrofolate + 5-amino-1-(5-phospho-beta-D-ribosyl)imidazole-4-carboxamide = 5-formamido-1-(5-phospho-D-ribosyl)imidazole-4-carboxamide + (6S)-5,6,7,8-tetrahydrofolate. The enzyme catalyses IMP + H2O = 5-formamido-1-(5-phospho-D-ribosyl)imidazole-4-carboxamide. It functions in the pathway purine metabolism; IMP biosynthesis via de novo pathway; 5-formamido-1-(5-phospho-D-ribosyl)imidazole-4-carboxamide from 5-amino-1-(5-phospho-D-ribosyl)imidazole-4-carboxamide (10-formyl THF route): step 1/1. It participates in purine metabolism; IMP biosynthesis via de novo pathway; IMP from 5-formamido-1-(5-phospho-D-ribosyl)imidazole-4-carboxamide: step 1/1. The protein is Bifunctional purine biosynthesis protein PurH of Polynucleobacter asymbioticus (strain DSM 18221 / CIP 109841 / QLW-P1DMWA-1) (Polynucleobacter necessarius subsp. asymbioticus).